We begin with the raw amino-acid sequence, 179 residues long: Large ribosomal subunit protein uL5 (179 aa).

Belongs to the universal ribosomal protein uL5 family. As to quaternary structure, part of the 50S ribosomal subunit; part of the 5S rRNA/L5/L18/L25 subcomplex. Contacts the 5S rRNA and the P site tRNA. Forms a bridge to the 30S subunit in the 70S ribosome.

This is one of the proteins that bind and probably mediate the attachment of the 5S RNA into the large ribosomal subunit, where it forms part of the central protuberance. In the 70S ribosome it contacts protein S13 of the 30S subunit (bridge B1b), connecting the 2 subunits; this bridge is implicated in subunit movement. Contacts the P site tRNA; the 5S rRNA and some of its associated proteins might help stabilize positioning of ribosome-bound tRNAs. The sequence is that of Large ribosomal subunit protein uL5 from Clostridium beijerinckii (strain ATCC 51743 / NCIMB 8052) (Clostridium acetobutylicum).